The chain runs to 331 residues: MIKRNLPLMITIGVFVLGYLYCLTQFPGFASTRVICNILTDNAFLGIIAVGMTFVILSGGIDLSVGSVIAFTGVFLAKVIGDFGLSPLLAFPLVLVMGCAFGAFMGLLIDALKIPAFIITLAGMFFLRGVSYLVSEESIPINHPIYDTLSSLAWKIPGGGRLSAMGLLMLAVVVIGIFLAHRTRFGNQVYAIGGNATSANLMGISTRSTTIRIYMLSTGLATLAGIVFSIYTQAGYALAGVGVELDAIASVVIGGTLLSGGVGTVLGTLFGVAIQGLIQTYINFDGTLSSWWTKIAIGILLFIFIALQRGLTVLWENRQSSPVTRVNIAQQ.

Over 1–5 (MIKRN) the chain is Cytoplasmic. Residues 6–26 (LPLMITIGVFVLGYLYCLTQF) traverse the membrane as a helical segment. Residues 27–42 (PGFASTRVICNILTDN) lie on the Periplasmic side of the membrane. A helical transmembrane segment spans residues 43 to 63 (AFLGIIAVGMTFVILSGGIDL). Over 64-88 (SVGSVIAFTGVFLAKVIGDFGLSPL) the chain is Cytoplasmic. The helical transmembrane segment at 89 to 109 (LAFPLVLVMGCAFGAFMGLLI) threads the bilayer. At 110 to 113 (DALK) the chain is on the periplasmic side. The helical transmembrane segment at 114 to 134 (IPAFIITLAGMFFLRGVSYLV) threads the bilayer. Topologically, residues 135–159 (SEESIPINHPIYDTLSSLAWKIPGG) are cytoplasmic. Residues 160 to 180 (GRLSAMGLLMLAVVVIGIFLA) form a helical membrane-spanning segment. Residues 181 to 222 (HRTRFGNQVYAIGGNATSANLMGISTRSTTIRIYMLSTGLAT) lie on the Periplasmic side of the membrane. Residues 223 to 243 (LAGIVFSIYTQAGYALAGVGV) form a helical membrane-spanning segment. At 244–250 (ELDAIAS) the chain is on the cytoplasmic side. A helical transmembrane segment spans residues 251–271 (VVIGGTLLSGGVGTVLGTLFG). At 272–294 (VAIQGLIQTYINFDGTLSSWWTK) the chain is on the periplasmic side. Residues 295–315 (IAIGILLFIFIALQRGLTVLW) form a helical membrane-spanning segment. Topologically, residues 316 to 331 (ENRQSSPVTRVNIAQQ) are cytoplasmic.

Belongs to the binding-protein-dependent transport system permease family. AraH/RbsC subfamily. In terms of assembly, the complex is composed of two ATP-binding proteins (YtfR), two transmembrane proteins (YtfT and YjfF) and a solute-binding protein (YtfQ).

It is found in the cell inner membrane. Functionally, part of the ABC transporter complex YtfQRT-YjfF involved in galactofuranose transport. Probably responsible for the translocation of the substrate across the membrane. In Escherichia coli (strain K12), this protein is Inner membrane ABC transporter permease protein YjfF (yjfF).